We begin with the raw amino-acid sequence, 118 residues long: Large ribosomal subunit protein uL18 (118 aa).

This sequence belongs to the universal ribosomal protein uL18 family. Part of the 50S ribosomal subunit; part of the 5S rRNA/L5/L18/L25 subcomplex. Contacts the 5S and 23S rRNAs.

This is one of the proteins that bind and probably mediate the attachment of the 5S RNA into the large ribosomal subunit, where it forms part of the central protuberance. The chain is Large ribosomal subunit protein uL18 from Zymomonas mobilis subsp. mobilis (strain ATCC 31821 / ZM4 / CP4).